Here is a 514-residue protein sequence, read N- to C-terminus: Type-2 serine--tRNA ligase (514 aa).

Ala-313 contacts L-serine. Cys-315 contributes to the Zn(2+) binding site. Arg-344 provides a ligand contact to L-serine. ATP is bound by residues 344–346 (RWE) and 355–356 (RV). Residue 361 to 363 (RGE) coordinates L-serine. Zn(2+) is bound by residues Glu-363 and Cys-470. An ATP-binding site is contributed by Arg-477.

Belongs to the class-II aminoacyl-tRNA synthetase family. Type-2 seryl-tRNA synthetase subfamily. In terms of assembly, homodimer. The cofactor is Zn(2+).

It is found in the cytoplasm. The enzyme catalyses tRNA(Ser) + L-serine + ATP = L-seryl-tRNA(Ser) + AMP + diphosphate + H(+). It catalyses the reaction tRNA(Sec) + L-serine + ATP = L-seryl-tRNA(Sec) + AMP + diphosphate + H(+). It functions in the pathway aminoacyl-tRNA biosynthesis; selenocysteinyl-tRNA(Sec) biosynthesis; L-seryl-tRNA(Sec) from L-serine and tRNA(Sec): step 1/1. Functionally, catalyzes the attachment of serine to tRNA(Ser). Is also able to aminoacylate tRNA(Sec) with serine, to form the misacylated tRNA L-seryl-tRNA(Sec), which will be further converted into selenocysteinyl-tRNA(Sec). In Methanococcus maripaludis (strain DSM 14266 / JCM 13030 / NBRC 101832 / S2 / LL), this protein is Type-2 serine--tRNA ligase (serS).